Reading from the N-terminus, the 452-residue chain is Gamma-aminobutyric acid receptor subunit delta (452 aa).

An N-terminal signal peptide occupies residues 1–24 (MDAPARLLAPLLLLCAQQLRGTRA). The Extracellular segment spans residues 25 to 251 (MNDIGDYVGS…HLRRNRGVYI (227 aa)). N-linked (GlcNAc...) asparagine glycans are attached at residues N103 and N106. A disulfide bridge links C164 with C178. The chain crosses the membrane as a helical span at residues 252–271 (IQSYMPSVLLVAMSWVSFWI). The Cytoplasmic portion of the chain corresponds to 272-275 (SQAA). Residues 276 to 298 (VPARVSLGITTVLTMTTLMVSAR) form a helical membrane-spanning segment. The Extracellular segment spans residues 299–308 (SSLPRASAIK). A helical transmembrane segment spans residues 309–331 (ALDVYFWICYVFVFAALVEYAFA). At 332–426 (HFNADYRKKQ…ARLRPIDADT (95 aa)) the chain is on the cytoplasmic side. S390 is modified (phosphoserine). A helical membrane pass occupies residues 427 to 449 (IDIYARAVFPAAFAAVNVIYWAA). The Extracellular segment spans residues 450 to 452 (YAM).

This sequence belongs to the ligand-gated ion channel (TC 1.A.9) family. Gamma-aminobutyric acid receptor (TC 1.A.9.5) subfamily. GABRD sub-subfamily. Heteropentamer, formed by a combination of alpha (GABRA1-6), beta (GABRB1-3), gamma (GABRG1-3), delta (GABRD), epsilon (GABRE), rho (GABRR1-3), pi (GABRP) and theta (GABRQ) chains, each subunit exhibiting distinct physiological and pharmacological properties.

The protein localises to the cell membrane. The enzyme catalyses chloride(in) = chloride(out). In terms of biological role, delta subunit of the heteropentameric ligand-gated chloride channel gated by gamma-aminobutyric acid (GABA), a major inhibitory neurotransmitter in the brain. GABA-gated chloride channels, also named GABA(A) receptors (GABAAR), consist of five subunits arranged around a central pore and contain GABA active binding site(s) located at the alpha and beta subunit interface(s). When activated by GABA, GABAARs selectively allow the flow of chloride anions across the cell membrane down their electrochemical gradient. GABAARs containing delta/GABRD subunits are predominantly located in extrasynaptic or perisynaptic positions on hippocampus and cerebellar granule cells, and contribute to the tonic GABAergic inhibition. GABAAR containing alpha-4-beta-3-delta subunits can simultaneously bind GABA and histamine where histamine binds at the interface of two neighboring beta subunits, which may be involved in the regulation of sleep and wakefulness. The polypeptide is Gamma-aminobutyric acid receptor subunit delta (Homo sapiens (Human)).